Consider the following 131-residue polypeptide: MAAKLIVFVCAIALVAQSVLGTGCGCCCRGCGCGCGGCGCGCCENFRVCSNSAAPTGLSICSENRYKGDVCVCGEVPFLGTADVCGNMCSSGCGCIDYGCGNGCVGITRSCGGCGCGCGGCGCGCGGCGCC.

An N-terminal signal peptide occupies residues 1-21 (MAAKLIVFVCAIALVAQSVLG). The interval 22–46 (TGCGCCCRGCGCGCGGCGCGCCENF) is left arm. Positions 47–110 (RVCSNSAAPT…GNGCVGITRS (64 aa)) are central domain. The interval 111-131 (CGGCGCGCGGCGCGCGGCGCC) is right arm (Gly-rich tandem repeats).

Belongs to the chorion protein family.

Functionally, this protein is one of many from the eggshell of the silk moth. The chain is Chorion class high-cysteine HCB protein 12 from Bombyx mori (Silk moth).